A 1211-amino-acid polypeptide reads, in one-letter code: Periplasmic acid trehalase ATC1 (1211 aa).

Topologically, residues 1-46 (MKRIRSLWFNAEASYSNLNNSPSLRNKNSTGNNSRSKNYRSFSRFD) are cytoplasmic. The chain crosses the membrane as a helical span at residues 47 to 67 (LINSILLLMMLFLLAIFVTAL). At 68–1211 (YLTKSSRLTY…ATIKEIVLND (1144 aa)) the chain is on the periplasmic side. Positions 70–131 (TKSSRLTYSH…NTAYYDDENM (62 aa)) are required for cell surface targeting. Residues Asn98, Asn207, Asn238, Asn247, Asn255, Asn259, Asn325, Asn370, Asn376, and Asn488 are each glycosylated (N-linked (GlcNAc...) asparagine). 513 to 514 (WD) contacts substrate. N-linked (GlcNAc...) asparagine glycans are attached at residues Asn539, Asn568, Asn628, and Asn638. Glu644 functions as the Proton donor in the catalytic mechanism. N-linked (GlcNAc...) asparagine glycans are attached at residues Asn696 and Asn705. Residue 711-712 (KQ) coordinates substrate. 10 N-linked (GlcNAc...) asparagine glycosylation sites follow: Asn879, Asn897, Asn910, Asn972, Asn990, Asn1031, Asn1049, Asn1064, Asn1147, and Asn1157.

This sequence belongs to the glycosyl hydrolase 65 family. In terms of processing, glycosylated.

It is found in the membrane. The protein localises to the vacuole lumen. Its subcellular location is the periplasm. It carries out the reaction alpha,alpha-trehalose + H2O = alpha-D-glucose + beta-D-glucose. Functionally, periplasmic acid trehalase that catalyzes hydrolysis of the disaccharide trehalose and required for growth on trehalose as carbon source. Growth on trehalose is strictly respiratory. This chain is Periplasmic acid trehalase ATC1, found in Saccharomyces cerevisiae (strain CEN.PK113-7D) (Baker's yeast).